The chain runs to 276 residues: Diaminopimelate epimerase (276 aa).

Substrate-binding residues include Asn13, Gln46, and Asn66. Cys75 serves as the catalytic Proton donor. Substrate-binding positions include Gly76 to Asn77, Asn159, Asn192, and Glu210 to Arg211. Cys219 functions as the Proton acceptor in the catalytic mechanism. Gly220–Thr221 serves as a coordination point for substrate.

This sequence belongs to the diaminopimelate epimerase family. Homodimer.

It localises to the cytoplasm. It carries out the reaction (2S,6S)-2,6-diaminopimelate = meso-2,6-diaminopimelate. It functions in the pathway amino-acid biosynthesis; L-lysine biosynthesis via DAP pathway; DL-2,6-diaminopimelate from LL-2,6-diaminopimelate: step 1/1. Catalyzes the stereoinversion of LL-2,6-diaminopimelate (L,L-DAP) to meso-diaminopimelate (meso-DAP), a precursor of L-lysine and an essential component of the bacterial peptidoglycan. The polypeptide is Diaminopimelate epimerase (Teredinibacter turnerae (strain ATCC 39867 / T7901)).